The primary structure comprises 538 residues: Chaperonin GroEL 1 (538 aa).

ATP is bound by residues 29–32 (TLGP), 86–90 (DGTTT), Gly413, and Asp494.

The protein belongs to the chaperonin (HSP60) family. In terms of assembly, forms a cylinder of 14 subunits composed of two heptameric rings stacked back-to-back. Interacts with the co-chaperonin GroES.

Its subcellular location is the cytoplasm. It carries out the reaction ATP + H2O + a folded polypeptide = ADP + phosphate + an unfolded polypeptide.. Its function is as follows. Together with its co-chaperonin GroES, plays an essential role in assisting protein folding. The GroEL-GroES system forms a nano-cage that allows encapsulation of the non-native substrate proteins and provides a physical environment optimized to promote and accelerate protein folding. This is Chaperonin GroEL 1 from Mycobacterium avium (strain 104).